Here is a 347-residue protein sequence, read N- to C-terminus: 3-isopropylmalate dehydrogenase (347 aa).

Substrate contacts are provided by arginine 94, arginine 104, arginine 128, and aspartate 219. 3 residues coordinate Mg(2+): aspartate 219, aspartate 243, and aspartate 247. 279–291 (GSAPDIAGQGKAD) provides a ligand contact to NAD(+).

Belongs to the isocitrate and isopropylmalate dehydrogenases family. LeuB type 2 subfamily. As to quaternary structure, homodimer. It depends on Mg(2+) as a cofactor. The cofactor is Mn(2+).

The protein localises to the cytoplasm. The catalysed reaction is (2R,3S)-3-isopropylmalate + NAD(+) = 4-methyl-2-oxopentanoate + CO2 + NADH. It functions in the pathway amino-acid biosynthesis; L-leucine biosynthesis; L-leucine from 3-methyl-2-oxobutanoate: step 3/4. Functionally, catalyzes the oxidation of 3-carboxy-2-hydroxy-4-methylpentanoate (3-isopropylmalate) to 3-carboxy-4-methyl-2-oxopentanoate. The product decarboxylates to 4-methyl-2 oxopentanoate. The polypeptide is 3-isopropylmalate dehydrogenase (Streptomyces griseus subsp. griseus (strain JCM 4626 / CBS 651.72 / NBRC 13350 / KCC S-0626 / ISP 5235)).